Consider the following 504-residue polypeptide: Signal transduction histidine-protein kinase/phosphatase MprB (504 aa).

Over 1 to 26 (MWWFRRRDRAPLRATSSLSLRWRVML) the chain is Cytoplasmic. The chain crosses the membrane as a helical span at residues 27–47 (LAMSMVAMVVVLMSFAVYAVI). The Extracellular segment spans residues 48–163 (SAALYSDIDN…PTEAVMNKLR (116 aa)). The helical transmembrane segment at 164–184 (WVLLIVGGIGVAVAAVAGGMV) threads the bilayer. Residues 185-504 (TRAGLRPVGR…SVESQSTRAT (320 aa)) are Cytoplasmic-facing. The region spanning 186–238 (RAGLRPVGRLTEAAERVARTDDLRPIPVFGSDELARLTEAFNLMLRALAESRE) is the HAMP domain. Positions 246 to 466 (DAGHELRTPL…SIYVLLPGRR (221 aa)) constitute a Histidine kinase domain. At His-249 the chain carries Phosphohistidine; by autocatalysis. The segment at 471–504 (QLPGATAGARSTDIENSRGSANVISVESQSTRAT) is disordered. A compositionally biased stretch (polar residues) spans 487 to 504 (SRGSANVISVESQSTRAT).

Mg(2+) serves as cofactor. Mn(2+) is required as a cofactor. Autophosphorylated.

The protein resides in the cell membrane. It carries out the reaction ATP + protein L-histidine = ADP + protein N-phospho-L-histidine.. In terms of biological role, member of the two-component regulatory system MprB/MprA which contributes to maintaining a balance among several systems involved in stress resistance and is required for establishment and maintenance of persistent infection in the host. In response to environmental signals MprB acts both as a membrane-associated protein kinase that undergoes autophosphorylation and subsequently transfers the phosphate to MprA, and a protein phosphatase that dephosphorylates phospho-MprA. This chain is Signal transduction histidine-protein kinase/phosphatase MprB (mprB), found in Mycobacterium tuberculosis (strain ATCC 25177 / H37Ra).